A 341-amino-acid chain; its full sequence is tRNA N6-adenosine threonylcarbamoyltransferase (341 aa).

The Fe cation site is built by His-111 and His-115. Substrate is bound by residues 134–138, Asp-167, Gly-180, and Asn-270; that span reads LVSGG. Asp-298 contributes to the Fe cation binding site.

The protein belongs to the KAE1 / TsaD family. It depends on Fe(2+) as a cofactor.

The protein localises to the cytoplasm. It carries out the reaction L-threonylcarbamoyladenylate + adenosine(37) in tRNA = N(6)-L-threonylcarbamoyladenosine(37) in tRNA + AMP + H(+). Functionally, required for the formation of a threonylcarbamoyl group on adenosine at position 37 (t(6)A37) in tRNAs that read codons beginning with adenine. Is involved in the transfer of the threonylcarbamoyl moiety of threonylcarbamoyl-AMP (TC-AMP) to the N6 group of A37, together with TsaE and TsaB. TsaD likely plays a direct catalytic role in this reaction. The protein is tRNA N6-adenosine threonylcarbamoyltransferase of Thiobacillus denitrificans (strain ATCC 25259 / T1).